The primary structure comprises 127 residues: Glycine cleavage system H protein (127 aa).

The Lipoyl-binding domain occupies 27 to 109 (TVRVGITHIA…YGEGWLYEVK (83 aa)). Residue Lys-68 is modified to N6-lipoyllysine.

The protein belongs to the GcvH family. In terms of assembly, the glycine cleavage system is composed of four proteins: P, T, L and H. The cofactor is (R)-lipoate.

In terms of biological role, the glycine cleavage system catalyzes the degradation of glycine. The H protein shuttles the methylamine group of glycine from the P protein to the T protein. The sequence is that of Glycine cleavage system H protein from Corynebacterium jeikeium (strain K411).